The primary structure comprises 253 residues: 5'/3'-nucleotidase SurE (253 aa).

Residues Asp8, Asp9, Ser39, and Asn92 each contribute to the a divalent metal cation site.

The protein belongs to the SurE nucleotidase family. It depends on a divalent metal cation as a cofactor.

It is found in the cytoplasm. It carries out the reaction a ribonucleoside 5'-phosphate + H2O = a ribonucleoside + phosphate. It catalyses the reaction a ribonucleoside 3'-phosphate + H2O = a ribonucleoside + phosphate. The catalysed reaction is [phosphate](n) + H2O = [phosphate](n-1) + phosphate + H(+). Functionally, nucleotidase with a broad substrate specificity as it can dephosphorylate various ribo- and deoxyribonucleoside 5'-monophosphates and ribonucleoside 3'-monophosphates with highest affinity to 3'-AMP. Also hydrolyzes polyphosphate (exopolyphosphatase activity) with the preference for short-chain-length substrates (P20-25). Might be involved in the regulation of dNTP and NTP pools, and in the turnover of 3'-mononucleotides produced by numerous intracellular RNases (T1, T2, and F) during the degradation of various RNAs. The protein is 5'/3'-nucleotidase SurE of Escherichia coli O7:K1 (strain IAI39 / ExPEC).